Reading from the N-terminus, the 442-residue chain is MEQQLTLVLLDSPKGAKYVETFEEAASSSSSSSSSSVPSCTDHRHRTFVKFFLYFSLVALAYYFIISSLAVSPIPPTLPQSSPGNVSSAKCDLFTGDWIPDPTGPLYTNVTCRHIQDFQNCLLNGRPDVNYLFWRWKPRDCDLPRFSPSQFLASVKNKWWAFIGDSIARNHVQSLICILSQVEEVEEIYHDKEFRSKIWRFPSHNFTLSVIWSPFLLKSETSSNSDIQLYLDQLDHKWTVQYPKFDYVVISGGKWFLKTTIFHENNVVTGCHYCQGRNNLTDLGYDYSYRKTLNLLRDFVLNSTHKPLVLFRTTTPDHFENGEWNTGGYCNRTMPFKEGQANMKTVDDVMRDVELEVFQKFGKGFGLGSNIRLLDTTGMSLLRPDGHPGPYRHPNPFAGVKNKSNVQNDCLHWCLPGPIDSWNDVMVETTLNRERELYDLTG.

A helical; Signal-anchor for type II membrane protein membrane pass occupies residues 51–71 (FFLYFSLVALAYYFIISSLAV). The short motif at 164-166 (GDS) is the GDS motif element. Positions 409-423 (DCLHWCLPGPIDSWN) match the DCXHWCLPGXXDXWN motif motif.

Belongs to the PC-esterase family. TBL subfamily.

The protein resides in the membrane. May be involved in the O-acetylation of mannan. May act as a bridging protein that binds pectin and other cell wall polysaccharides. Probably involved in maintaining esterification of pectins. The polypeptide is Protein trichome birefringence-like 26 (TBL26) (Arabidopsis thaliana (Mouse-ear cress)).